A 545-amino-acid polypeptide reads, in one-letter code: Phenylalanine--tRNA ligase beta subunit (545 aa).

Residues 268–343 (FLHKIQNVRE…MSIGYNNLEP (76 aa)) enclose the B5 domain. 4 residues coordinate Mg(2+): Asp-321, Asp-327, Glu-330, and Asp-331.

This sequence belongs to the phenylalanyl-tRNA synthetase beta subunit family. Type 2 subfamily. In terms of assembly, tetramer of two alpha and two beta subunits. Mg(2+) is required as a cofactor.

It is found in the cytoplasm. It catalyses the reaction tRNA(Phe) + L-phenylalanine + ATP = L-phenylalanyl-tRNA(Phe) + AMP + diphosphate + H(+). This chain is Phenylalanine--tRNA ligase beta subunit, found in Saccharolobus islandicus (strain Y.N.15.51 / Yellowstone #2) (Sulfolobus islandicus).